We begin with the raw amino-acid sequence, 190 residues long: Probable oligoribonuclease (190 aa).

One can recognise an Exonuclease domain in the interval 19-181 (MVWVDLEMTG…QDIEESIEEL (163 aa)). Residue Y140 is part of the active site.

This sequence belongs to the oligoribonuclease family.

In terms of biological role, 3'-to-5' exoribonuclease specific for small oligoribonucleotides. The polypeptide is Probable oligoribonuclease (rexo2-1) (Dictyostelium discoideum (Social amoeba)).